A 568-amino-acid chain; its full sequence is Urease subunit alpha (568 aa).

Residues 129–568 (GAIDSHIHFI…LPMAQRYFLF (440 aa)) enclose the Urease domain. Positions 134, 136, and 217 each coordinate Ni(2+). An N6-carboxylysine modification is found at Lys-217. His-219 lines the substrate pocket. Ni(2+) is bound by residues His-246 and His-272. The active-site Proton donor is the His-320. Residue Asp-360 participates in Ni(2+) binding.

The protein belongs to the metallo-dependent hydrolases superfamily. Urease alpha subunit family. In terms of assembly, heterotrimer of UreA (gamma), UreB (beta) and UreC (alpha) subunits. Three heterotrimers associate to form the active enzyme. Requires Ni cation as cofactor. In terms of processing, carboxylation allows a single lysine to coordinate two nickel ions.

The protein resides in the cytoplasm. The enzyme catalyses urea + 2 H2O + H(+) = hydrogencarbonate + 2 NH4(+). Its pathway is nitrogen metabolism; urea degradation; CO(2) and NH(3) from urea (urease route): step 1/1. This is Urease subunit alpha from Saccharophagus degradans (strain 2-40 / ATCC 43961 / DSM 17024).